The chain runs to 283 residues: Malonyl-[acyl-carrier protein] O-methyltransferase (283 aa).

It belongs to the methyltransferase superfamily.

It catalyses the reaction malonyl-[ACP] + S-adenosyl-L-methionine = malonyl-[ACP] methyl ester + S-adenosyl-L-homocysteine. Its pathway is cofactor biosynthesis; biotin biosynthesis. Its function is as follows. Converts the free carboxyl group of a malonyl-thioester to its methyl ester by transfer of a methyl group from S-adenosyl-L-methionine (SAM). It allows to synthesize pimeloyl-ACP via the fatty acid synthetic pathway. In Acetivibrio thermocellus (strain ATCC 27405 / DSM 1237 / JCM 9322 / NBRC 103400 / NCIMB 10682 / NRRL B-4536 / VPI 7372) (Clostridium thermocellum), this protein is Malonyl-[acyl-carrier protein] O-methyltransferase.